The chain runs to 285 residues: RNA polymerase sigma factor RpoH (285 aa).

Residues 53-122 are sigma-70 factor domain-2; the sequence is LILSHLRFVV…IHEYVLRNWR (70 aa). Positions 77–80 match the Interaction with polymerase core subunit RpoC motif; sequence DLIQ. Residues 229–281 form a sigma-70 factor domain-4 region; sequence AMEGLDERSQDIIRARWLDEDNKSTLQELADRYGVSAERVRQLEKNAMKKLRA. Positions 254-273 form a DNA-binding region, H-T-H motif; the sequence is LQELADRYGVSAERVRQLEK.

Belongs to the sigma-70 factor family. RpoH subfamily. As to quaternary structure, interacts with the RNA polymerase core enzyme.

The protein resides in the cytoplasm. Functionally, sigma factors are initiation factors that promote the attachment of RNA polymerase to specific initiation sites and are then released. This sigma factor is involved in regulation of expression of heat shock genes. This chain is RNA polymerase sigma factor RpoH, found in Enterobacter cloacae.